A 504-amino-acid polypeptide reads, in one-letter code: Maturase K (504 aa).

The protein belongs to the intron maturase 2 family. MatK subfamily.

Its subcellular location is the plastid. The protein resides in the chloroplast. Functionally, usually encoded in the trnK tRNA gene intron. Probably assists in splicing its own and other chloroplast group II introns. The polypeptide is Maturase K (Nepenthes gracilis (Slender pitcher plant)).